A 159-amino-acid chain; its full sequence is NAD(P)H-quinone oxidoreductase subunit J, chloroplastic (159 aa).

This sequence belongs to the complex I 30 kDa subunit family. NDH is composed of at least 16 different subunits, 5 of which are encoded in the nucleus.

It is found in the plastid. Its subcellular location is the chloroplast thylakoid membrane. It carries out the reaction a plastoquinone + NADH + (n+1) H(+)(in) = a plastoquinol + NAD(+) + n H(+)(out). It catalyses the reaction a plastoquinone + NADPH + (n+1) H(+)(in) = a plastoquinol + NADP(+) + n H(+)(out). NDH shuttles electrons from NAD(P)H:plastoquinone, via FMN and iron-sulfur (Fe-S) centers, to quinones in the photosynthetic chain and possibly in a chloroplast respiratory chain. The immediate electron acceptor for the enzyme in this species is believed to be plastoquinone. Couples the redox reaction to proton translocation, and thus conserves the redox energy in a proton gradient. The polypeptide is NAD(P)H-quinone oxidoreductase subunit J, chloroplastic (Oryza nivara (Indian wild rice)).